The sequence spans 215 residues: MESNPPDSTGPMHVPFGHIVANEKWRGSQLAQGMQGKIKLVFEDGLTPVDFYLSSKSCILYITEAELVAGNGYRKRLVRVRNSNKLQGIVVVEKTQMSEQYFPAVQKFTVLDLGMVLLPVASQMEASCLIIQLVQEQTREPSKNPFLRKKRALVSEPALLRSVQQIPGVGKVKAPLLLQRFPSIQQLSNASLRELEAVVGPAAAQRIHAFFSQPR.

As to quaternary structure, belongs to the multisubunit FA complex composed of FANCA, FANCB, FANCC, FANCE, FANCF, FANCG, FANCL/PHF9, FANCM and FAAP24. Interacts with FANCM.

The protein localises to the nucleus. In terms of biological role, plays a role in DNA repair through recruitment of the FA core complex to damaged DNA. Regulates FANCD2 monoubiquitination upon DNA damage. Induces chromosomal instability as well as hypersensitivity to DNA cross-linking agents, when repressed. Targets FANCM/FAAP24 complex to the DNA, preferentially to single strand DNA. This Bos taurus (Bovine) protein is Fanconi anemia core complex-associated protein 24.